The following is a 160-amino-acid chain: MVSVRIGQGFDVHAFDEGDHVMLGGVAIPHSHGLKAHSDGDVALHALSDALLGALALGDIGHHFPDTDPQWRGADSGQLLTAIYSSILDAGWRLGNADLTVICQAPKLAPHILAMRERIAALLQCEQGQVSVKATTTEKLGFTGRKEGIAVQAVVLLESQ.

A divalent metal cation contacts are provided by D11 and H13. 4-CDP-2-C-methyl-D-erythritol 2-phosphate-binding positions include 11–13 and 37–38; these read DVH and HS. A divalent metal cation is bound at residue H45. Residues 59–61, 64–68, 135–138, F142, and R145 contribute to the 4-CDP-2-C-methyl-D-erythritol 2-phosphate site; these read DIG, FPDTD, and TTTE.

It belongs to the IspF family. Homotrimer. Requires a divalent metal cation as cofactor.

The enzyme catalyses 4-CDP-2-C-methyl-D-erythritol 2-phosphate = 2-C-methyl-D-erythritol 2,4-cyclic diphosphate + CMP. It functions in the pathway isoprenoid biosynthesis; isopentenyl diphosphate biosynthesis via DXP pathway; isopentenyl diphosphate from 1-deoxy-D-xylulose 5-phosphate: step 4/6. Its function is as follows. Involved in the biosynthesis of isopentenyl diphosphate (IPP) and dimethylallyl diphosphate (DMAPP), two major building blocks of isoprenoid compounds. Catalyzes the conversion of 4-diphosphocytidyl-2-C-methyl-D-erythritol 2-phosphate (CDP-ME2P) to 2-C-methyl-D-erythritol 2,4-cyclodiphosphate (ME-CPP) with a corresponding release of cytidine 5-monophosphate (CMP). The polypeptide is 2-C-methyl-D-erythritol 2,4-cyclodiphosphate synthase (Alcanivorax borkumensis (strain ATCC 700651 / DSM 11573 / NCIMB 13689 / SK2)).